A 259-amino-acid chain; its full sequence is Small ribosomal subunit protein mS23 (259 aa).

A compositionally biased stretch (polar residues) spans 230 to 244 (RAASFTGSALPSSEE). Residues 230-259 (RAASFTGSALPSSEESAPVDEETEKVPQQV) form a disordered region.

It belongs to the mitochondrion-specific ribosomal protein mS23 family. As to quaternary structure, component of the mitochondrial small ribosomal subunit.

The protein localises to the mitochondrion. The chain is Small ribosomal subunit protein mS23 (rsm25) from Aspergillus terreus (strain NIH 2624 / FGSC A1156).